The following is a 679-amino-acid chain: Transmembrane protein 214-B (679 aa).

The disordered stretch occupies residues 1–94; the sequence is MASGAPDGKW…KKKPQSGDSV (94 aa). The segment covering 18-30 has biased composition (basic and acidic residues); that stretch reads KSGERREGERKAL. N-linked (GlcNAc...) asparagine glycans are attached at residues Asn-70, Asn-298, and Asn-322. A run of 2 helical transmembrane segments spans residues 468 to 488 and 606 to 626; these read GGFPWWRLIVIAFVFLFGSVL and LLLHLHQTYLLPAVTYLEAAV.

It belongs to the TMEM214 family. Constitutively interacts with CASP4; required for the localization of procaspase 4 to the ER.

The protein localises to the endoplasmic reticulum membrane. In terms of biological role, critical mediator, in cooperation with CASP4, of endoplasmic reticulum-stress induced apoptosis. Required or the activation of CASP4 following endoplasmic reticulum stress. In Xenopus laevis (African clawed frog), this protein is Transmembrane protein 214-B (tmem214-b).